Here is a 200-residue protein sequence, read N- to C-terminus: MKKKAIFGGTFNPIHNAHLNIAAKSIEKLQLDELIFVPSGNPPHKSEKGIAPAELRYEMVKEAIKDNCKFRIDDYEIKKKGISYTYETLEHFSRSQKDVDWFFIAGLDSLMDLDKWRNVNTILSLCKFIVFNRSGYNKSQVLEQKEYLEKKYINNIVFLDIKPIDISSTIIRQKIRENEYIGDLVPEKIYDIIKKNKLYV.

The protein belongs to the NadD family.

The enzyme catalyses nicotinate beta-D-ribonucleotide + ATP + H(+) = deamido-NAD(+) + diphosphate. It participates in cofactor biosynthesis; NAD(+) biosynthesis; deamido-NAD(+) from nicotinate D-ribonucleotide: step 1/1. Functionally, catalyzes the reversible adenylation of nicotinate mononucleotide (NaMN) to nicotinic acid adenine dinucleotide (NaAD). In Clostridium acetobutylicum (strain ATCC 824 / DSM 792 / JCM 1419 / IAM 19013 / LMG 5710 / NBRC 13948 / NRRL B-527 / VKM B-1787 / 2291 / W), this protein is Probable nicotinate-nucleotide adenylyltransferase.